An 862-amino-acid chain; its full sequence is Valine--tRNA ligase (862 aa).

The 'HIGH' region signature appears at 43–53; sequence PNVTGSLHMGH. Residues Cys176, Cys179, Cys344, Cys347, Cys417, Cys420, Cys438, and Cys441 each contribute to the Zn(2+) site. Residues 528–532 carry the 'KMSKS' region motif; sequence KMSKS. Residue Lys531 participates in ATP binding. A coiled-coil region spans residues 802–862; the sequence is RRRQEKRLKE…RIREALSQIG (61 aa).

This sequence belongs to the class-I aminoacyl-tRNA synthetase family. ValS type 1 subfamily. Monomer. It depends on Zn(2+) as a cofactor.

The protein localises to the cytoplasm. The enzyme catalyses tRNA(Val) + L-valine + ATP = L-valyl-tRNA(Val) + AMP + diphosphate. Functionally, catalyzes the attachment of valine to tRNA(Val). As ValRS can inadvertently accommodate and process structurally similar amino acids such as threonine, to avoid such errors, it has a 'posttransfer' editing activity that hydrolyzes mischarged Thr-tRNA(Val) in a tRNA-dependent manner. The protein is Valine--tRNA ligase of Thermus thermophilus (strain ATCC BAA-163 / DSM 7039 / HB27).